The following is a 706-amino-acid chain: Elongation factor G (706 aa).

The tr-type G domain occupies 8-295 (ELYRNFGIMA…AVIDYLPSPL (288 aa)). Residues 17–24 (AHIDAGKT), 92–96 (DTPGH), and 146–149 (NKMD) contribute to the GTP site.

This sequence belongs to the TRAFAC class translation factor GTPase superfamily. Classic translation factor GTPase family. EF-G/EF-2 subfamily.

It is found in the cytoplasm. Functionally, catalyzes the GTP-dependent ribosomal translocation step during translation elongation. During this step, the ribosome changes from the pre-translocational (PRE) to the post-translocational (POST) state as the newly formed A-site-bound peptidyl-tRNA and P-site-bound deacylated tRNA move to the P and E sites, respectively. Catalyzes the coordinated movement of the two tRNA molecules, the mRNA and conformational changes in the ribosome. The polypeptide is Elongation factor G (Ruegeria sp. (strain TM1040) (Silicibacter sp.)).